The following is a 172-amino-acid chain: Large ribosomal subunit protein bL9 (172 aa).

This sequence belongs to the bacterial ribosomal protein bL9 family.

In terms of biological role, binds to the 23S rRNA. This Chlamydia caviae (strain ATCC VR-813 / DSM 19441 / 03DC25 / GPIC) (Chlamydophila caviae) protein is Large ribosomal subunit protein bL9.